The sequence spans 1332 residues: Elongator complex protein 1 (1332 aa).

5 positions are modified to phosphoserine: Ser-471, Ser-804, Ser-867, Ser-1171, and Ser-1174. The segment at 885-1332 (VDVNELYDHS…RTQWKLSLLD (448 aa)) is mediates dimerization. The disordered stretch occupies residues 1150-1208 (QAGLDDEVPHGQESDLFSETSSVVSGSEMSGKYSHSNSRISARSSKNRRKAERKKHSLK). Positions 1164–1177 (DLFSETSSVVSGSE) are enriched in polar residues. The segment at 1191–1209 (ARSSKNRRKAERKKHSLKE) is required for binding to tRNA. Residues 1194-1206 (SKNRRKAERKKHS) are compositionally biased toward basic residues.

It belongs to the ELP1/IKA1 family. Homodimer; dimerization promotes ELP1 stability and elongator complex formation. Component of the elongator complex which consists of ELP1, ELP2, ELP3, ELP4, ELP5 and ELP6. Interacts preferentially with MAP3K14/NIK followed by IKK-alpha and IKK-beta.

It is found in the cytoplasm. It localises to the nucleus. The protein operates within tRNA modification; 5-methoxycarbonylmethyl-2-thiouridine-tRNA biosynthesis. In terms of biological role, component of the elongator complex which is required for multiple tRNA modifications, including mcm5U (5-methoxycarbonylmethyl uridine), mcm5s2U (5-methoxycarbonylmethyl-2-thiouridine), and ncm5U (5-carbamoylmethyl uridine). The elongator complex catalyzes the formation of carboxymethyluridine in the wobble base at position 34 in tRNAs. Regulates the migration and branching of projection neurons in the developing cerebral cortex, through a process depending on alpha-tubulin acetylation. ELP1 binds to tRNA, mediating interaction of the elongator complex with tRNA. May act as a scaffold protein that assembles active IKK-MAP3K14 complexes (IKKA, IKKB and MAP3K14/NIK). This chain is Elongator complex protein 1, found in Homo sapiens (Human).